A 329-amino-acid chain; its full sequence is MTAGPTPGAVDAPSLHIPVLRDEVVDALAPRDGAVLVDGTFGAGGYTAALLASAACTVWAIDRDPAAVARGHALAARHPGRLTVLDGTFGCMESLLAAHGITRVDGIALDIGVSSPQIDDPSRGFSFRFDGPLDMRMGSHGTTAADIVNERDEAEIADIVWRYGEERHSRRVARAIVARRREAPITRTLDLAEIVRSVVPKSKDGIDPATRTFQALRIAVNDELGELERGLAAAERLLAPGGRLAVVTFHSLEDRVVKEFLRSRSAAAPAPSRHLPAPADAPAPTFRLIARSGVTPAPAELAANPRARSARLRSAERTSAPARRLGDAA.

S-adenosyl-L-methionine contacts are provided by residues Gly44–Tyr46, Asp62, Asp110, and Gln117. Residues Ala297 to Ala329 are disordered.

Belongs to the methyltransferase superfamily. RsmH family.

Its subcellular location is the cytoplasm. It carries out the reaction cytidine(1402) in 16S rRNA + S-adenosyl-L-methionine = N(4)-methylcytidine(1402) in 16S rRNA + S-adenosyl-L-homocysteine + H(+). In terms of biological role, specifically methylates the N4 position of cytidine in position 1402 (C1402) of 16S rRNA. The protein is Ribosomal RNA small subunit methyltransferase H of Rhodospirillum centenum (strain ATCC 51521 / SW).